A 435-amino-acid chain; its full sequence is 3-phosphoshikimate 1-carboxyvinyltransferase (435 aa).

Residues K15, S16, and R20 each coordinate 3-phosphoshikimate. K15 is a binding site for phosphoenolpyruvate. The phosphoenolpyruvate site is built by G96 and R124. Positions 169, 171, 195, 319, and 346 each coordinate 3-phosphoshikimate. Q171 is a binding site for phosphoenolpyruvate. Residue D319 is the Proton acceptor of the active site. Residues R350 and R394 each coordinate phosphoenolpyruvate.

This sequence belongs to the EPSP synthase family. As to quaternary structure, monomer.

It localises to the cytoplasm. It carries out the reaction 3-phosphoshikimate + phosphoenolpyruvate = 5-O-(1-carboxyvinyl)-3-phosphoshikimate + phosphate. Its pathway is metabolic intermediate biosynthesis; chorismate biosynthesis; chorismate from D-erythrose 4-phosphate and phosphoenolpyruvate: step 6/7. Its function is as follows. Catalyzes the transfer of the enolpyruvyl moiety of phosphoenolpyruvate (PEP) to the 5-hydroxyl of shikimate-3-phosphate (S3P) to produce enolpyruvyl shikimate-3-phosphate and inorganic phosphate. The polypeptide is 3-phosphoshikimate 1-carboxyvinyltransferase (Chloroherpeton thalassium (strain ATCC 35110 / GB-78)).